We begin with the raw amino-acid sequence, 1705 residues long: Rho guanine nucleotide exchange factor 28 (1705 aa).

2 disordered regions span residues 287–316 (RPEE…SAAE) and 473–524 (KKRS…ETNT). A phosphoserine mark is found at serine 313 and serine 478. Residues 501–510 (PGSQSSSRTG) show a composition bias toward polar residues. The residue at position 624 (serine 624) is a Phosphoserine. The segment at 630 to 649 (MTSPRNKSKTKSKDAKDKEK) is disordered. Basic and acidic residues predominate over residues 640 to 649 (KSKDAKDKEK). The Phorbol-ester/DAG-type zinc finger occupies 652 to 699 (RHQFAPGTFSGVLQCLVCDKTLLGKESLQCSNCNANVHKGCKDAAPAC). Composition is skewed to polar residues over residues 710–721 (NKPQTILGNSSF) and 759–775 (VPGT…TSLE). Positions 710 to 800 (NKPQTILGNS…ELLQSMGSSP (91 aa)) are disordered. The span at 777–791 (ESDHNSCRSRSHSDE) shows a compositional bias: basic and acidic residues. Positions 849-1044 (KRQDVIFELM…KDMIATVDLK (196 aa)) constitute a DH domain. The region spanning 1086–1188 (TLLYDGLVYW…WMRRIQQAVE (103 aa)) is the PH domain. Residues 1187–1207 (VESCPEEKGGRTSESDEDKRK) form a disordered region. Over residues 1191–1207 (PEEKGGRTSESDEDKRK) the composition is skewed to basic and acidic residues. The interaction with PTK2/FAK1; required for regulation of axonal branching and synapse formation stretch occupies residues 1295–1304 (AVSQSCEDSC). The disordered stretch occupies residues 1312–1339 (TLSSHDVPGSPTASLVTGGREGRGCSDV). The interval 1372–1383 (IIQAIQNLTRLL) is mediates cytoplasmic retention and interaction with YWHAH. Positions 1425-1705 (QKSRDADRQH…DGAKENIVYL (281 aa)) are interaction with microtubules. Residues 1488–1525 (RSRGELDLQLQEYQHSLERLREGQRLVEREQARMRAQQ) are a coiled coil. The RNA-binding stretch occupies residues 1496-1527 (QLQEYQHSLERLREGQRLVEREQARMRAQQSL). Serine 1538 is modified (phosphoserine). A mediates cytoplasmic retention and interaction with MAPK8IP1 region spans residues 1566-1579 (FINEALVQMSFNTF). A disordered region spans residues 1638–1705 (PFHESSKDSC…DGAKENIVYL (68 aa)). Over residues 1641–1655 (ESSKDSCKNDLDTSH) the composition is skewed to basic and acidic residues. Residues 1656–1669 (TESPTPHDSNSHRP) are compositionally biased toward polar residues. Residues 1688–1699 (TRQDGETGDGAK) are compositionally biased toward basic and acidic residues.

As to quaternary structure, homooligomer; forms cytoplasmic aggregates. Forms a complex with MAPK8 and MAPK8IP1. Interacts with RHOA. Interacts with microtubules. Interacts with YWHAE and YWHAH. Interacts with PTK2/FAK1. Interacts with NEFL. Interacts with CTNND2; prevents interaction with RHOA. In terms of processing, phosphorylated on tyrosine upon stimulation of cells by laminin.

It is found in the cytoplasm. The protein localises to the cell membrane. Functions as a RHOA-specific guanine nucleotide exchange factor regulating signaling pathways downstream of integrins and growth factor receptors. Functions in axonal branching, synapse formation and dendritic morphogenesis. Also functions in focal adhesion formation, cell motility and B-lymphocytes activation. May regulate NEFL expression and aggregation and play a role in apoptosis. This is Rho guanine nucleotide exchange factor 28 (ARHGEF28) from Homo sapiens (Human).